The chain runs to 479 residues: Sulfate adenylyltransferase subunit 1 (479 aa).

In terms of domain architecture, tr-type G spans 25-239 (KSLLRFLTCG…EVLETVDIQR (215 aa)). The tract at residues 34–41 (GSVDDGKS) is G1. 34-41 (GSVDDGKS) contacts GTP. The segment at 92-96 (GITID) is G2. Residues 113 to 116 (DTPG) are G3. GTP is bound by residues 113–117 (DTPGH) and 168–171 (NKMD). Positions 168-171 (NKMD) are G4. The G5 stretch occupies residues 206–208 (SAL).

Belongs to the TRAFAC class translation factor GTPase superfamily. Classic translation factor GTPase family. CysN/NodQ subfamily. In terms of assembly, heterodimer composed of CysD, the smaller subunit, and CysN.

The enzyme catalyses sulfate + ATP + H(+) = adenosine 5'-phosphosulfate + diphosphate. It participates in sulfur metabolism; hydrogen sulfide biosynthesis; sulfite from sulfate: step 1/3. Its function is as follows. With CysD forms the ATP sulfurylase (ATPS) that catalyzes the adenylation of sulfate producing adenosine 5'-phosphosulfate (APS) and diphosphate, the first enzymatic step in sulfur assimilation pathway. APS synthesis involves the formation of a high-energy phosphoric-sulfuric acid anhydride bond driven by GTP hydrolysis by CysN coupled to ATP hydrolysis by CysD. This is Sulfate adenylyltransferase subunit 1 from Salmonella heidelberg (strain SL476).